Consider the following 351-residue polypeptide: Histidinol-phosphate aminotransferase (351 aa).

Lysine 209 is subject to N6-(pyridoxal phosphate)lysine.

It belongs to the class-II pyridoxal-phosphate-dependent aminotransferase family. Histidinol-phosphate aminotransferase subfamily. As to quaternary structure, homodimer. The cofactor is pyridoxal 5'-phosphate.

The catalysed reaction is L-histidinol phosphate + 2-oxoglutarate = 3-(imidazol-4-yl)-2-oxopropyl phosphate + L-glutamate. It participates in amino-acid biosynthesis; L-histidine biosynthesis; L-histidine from 5-phospho-alpha-D-ribose 1-diphosphate: step 7/9. The polypeptide is Histidinol-phosphate aminotransferase (Chromohalobacter salexigens (strain ATCC BAA-138 / DSM 3043 / CIP 106854 / NCIMB 13768 / 1H11)).